Consider the following 176-residue polypeptide: Cathelicidin-2 (176 aa).

A signal peptide spans 1 to 29 (METQGASLSLGRWSLWLLLLGLVLPSASA). Glutamine 30 carries the post-translational modification Pyrrolidone carboxylic acid. A propeptide spanning residues 30–130 (QALSYREAVL…DINCNELQSV (101 aa)) is cleaved from the precursor. 2 disulfide bridges follow: cysteine 85–cysteine 96 and cysteine 107–cysteine 124. A disordered region spans residues 135–176 (PIRRPPIRPPFRPPFRPPVRPPIRPPFRPPFRPPIGPFPGRR). Residues 141 to 176 (IRPPFRPPFRPPVRPPIRPPFRPPFRPPIGPFPGRR) show a composition bias toward pro residues. Proline 173 carries the post-translational modification Proline amide. Positions 174-176 (GRR) are cleaved as a propeptide — removed in mature form.

Belongs to the cathelicidin family. In terms of processing, elastase is responsible for its maturation.

The protein resides in the secreted. In terms of biological role, binds to the lipid A moiety of bacterial lipipolysaccharides (LPS), a glycolipid present in the outer membrane of all Gram-negative bacteria. Potent antimicrobial activity. This is Cathelicidin-2 (CATHL2) from Ovis aries (Sheep).